A 183-amino-acid chain; its full sequence is Dual-action ribosomal maturation protein DarP (183 aa).

This sequence belongs to the DarP family.

Its subcellular location is the cytoplasm. Functionally, member of a network of 50S ribosomal subunit biogenesis factors which assembles along the 30S-50S interface, preventing incorrect 23S rRNA structures from forming. Promotes peptidyl transferase center (PTC) maturation. The protein is Dual-action ribosomal maturation protein DarP of Escherichia coli O81 (strain ED1a).